A 1286-amino-acid polypeptide reads, in one-letter code: ABC transporter B family member 4 (1286 aa).

The segment at 1 to 39 (MASESGLNGDPNILEEVSETKRDKEEEEEVKKTEKKDEE) is disordered. Positions 18-39 (SETKRDKEEEEEVKKTEKKDEE) are enriched in basic and acidic residues. A helical membrane pass occupies residues 60-80 (FLLMILGTLGSIGNGLGFPLM). The region spanning 63–349 (MILGTLGSIG…TSPCLSAFAA (287 aa)) is the ABC transmembrane type-1 1 domain. N-linked (GlcNAc...) asparagine glycans are attached at residues asparagine 94 and asparagine 97. The next 5 membrane-spanning stretches (helical) occupy residues 109 to 129 (FVWLGIGTFAAAFLQLSGWMI), 186 to 206 (IQLLATFVGGFVIAFVRGWLL), 208 to 228 (LVMLSSIPLLVMAGALLAIVI), 288 to 308 (GLGLGTLFLVVFCSYALAVWY), and 317 to 337 (GYTGGQVLNIIIAVLTGSMSL). Positions 384–620 (IELKDVYFTY…PEGAYSQLIR (237 aa)) constitute an ABC transporter 1 domain. 419 to 426 (GQSGSGKS) contacts ATP. Asparagine 500 and asparagine 571 each carry an N-linked (GlcNAc...) asparagine glycan. Over residues 625–636 (KKSDENAAEEQK) the composition is skewed to basic and acidic residues. The interval 625–669 (KKSDENAAEEQKMSSIESFKQSSLRKSSLGRSLSKGGSSRGNSSR) is disordered. The segment covering 646–669 (SSLRKSSLGRSLSKGGSSRGNSSR) has biased composition (low complexity). A glycan (N-linked (GlcNAc...) asparagine) is linked at asparagine 666. Serine 671 carries the phosphoserine modification. One can recognise an ABC transmembrane type-1 2 domain in the interval 720–1007 (LILGSISAAA…SSSLSPDSSK (288 aa)). 2 consecutive transmembrane segments (helical) span residues 721–741 (ILGSISAAANGVILPIFGILI) and 764–784 (IIFMVLGFASIIAYPAQTFFF). 2 N-linked (GlcNAc...) asparagine glycosylation sites follow: asparagine 816 and asparagine 846. 4 helical membrane passes run 850–870 (ILAGLIIAFLACWQLAFVVLA), 871–891 (MLPLIALNGFLYMKFMKGFSA), 942–962 (GIVSGIGFGFSFFVLFSSYAA), and 976–996 (TTFDSVFRVFFALTMAAMAIS). One can recognise an ABC transporter 2 domain in the interval 1042 to 1279 (IELRHVSFKY…KDGVYASLVQ (238 aa)). 1077–1084 (GESGSGKS) is a binding site for ATP. N-linked (GlcNAc...) asparagine glycans are attached at residues asparagine 1131 and asparagine 1230.

This sequence belongs to the ABC transporter superfamily. ABCB family. Multidrug resistance exporter (TC 3.A.1.201) subfamily. As to quaternary structure, interacts with 1-naphthylphthalamic acid (NPA). Post-translationally, phosphorylation level varies significantly during early response to bacterial elicitor. Mostly expressed in roots, especially in the root elongation zone and lateral roots. In mature portion of the root, expressed in the epidermis and cortex. In the root elongation zone, confined to epidermis. In root tips, present in the root cap, S3 columella and epidermal cells.

The protein resides in the cell membrane. Auxin influx transporter that mediates the transport of auxin in roots. Contributes to the basipetal transport in hypocotyls and root tips by establishing an auxin uptake sink in the root cap. Confers sensitivity to 1-N-naphthylphthalamic acid (NPA). Regulates the root elongation, the initiation of lateral roots and the development of root hairs. Can transport IAA, indole-3-propionic acid, NPA syringic acid, vanillic acid and some auxin metabolites, but not 2,4-D and 1-naphthaleneacetic acid. The polypeptide is ABC transporter B family member 4 (ABCB4) (Arabidopsis thaliana (Mouse-ear cress)).